The primary structure comprises 4307 residues: Cytoplasmic dynein 2 heavy chain 1 (4307 aa).

The segment at 1–1650 (MANGTADVRK…CVQMVDSEFQ (1650 aa)) is stem. ATP is bound at residue 145–152 (LGIVLRRS). Positions 1074 to 1103 (NTLDKSAKLIKEKKIEFDDLEVTRKKLVDD) form a coiled coil. AAA regions lie at residues 1651–1875 (YTYE…VLRG), 1938–2161 (ELSA…KQND), 2251–2505 (ADDF…WVLG), and 2617–2863 (HYGR…ESCK). ATP contacts are provided by residues 1689–1696 (GPAGTGKT), 1979–1986 (GPSGAGKS), 2291–2298 (GPEGCGKG), and 2655–2662 (GRSGVGRR). The segment at 2881-3169 (AISSSKKKEL…AEVSKAQETI (289 aa)) is stalk. 3 coiled-coil regions span residues 2897–2982 (LQAG…KEVQ), 3109–3200 (LETE…LATL), and 3408–3442 (IQHE…SLLE). AAA regions lie at residues 3244–3473 (LCTE…LIQE) and 3690–3905 (MALF…IIDR).

This sequence belongs to the dynein heavy chain family. In terms of assembly, the cytoplasmic dynein complex 2 is probably composed by a heavy chain DYNC2H1 homodimer and a number of DYNC2LI1 light intermediate chains.

It localises to the cytoplasm. The protein resides in the cytoskeleton. The protein localises to the cilium axoneme. It is found in the cell membrane. May function as a motor for intraflagellar retrograde transport. Functions in cilia biogenesis. May play a role in transport between endoplasmic reticulum and Golgi or organization of the Golgi in cells. The sequence is that of Cytoplasmic dynein 2 heavy chain 1 (DYNC2H1) from Homo sapiens (Human).